The primary structure comprises 138 residues: Large ribosomal subunit protein eL32 (138 aa).

It belongs to the eukaryotic ribosomal protein eL32 family.

In Saccharolobus islandicus (strain Y.N.15.51 / Yellowstone #2) (Sulfolobus islandicus), this protein is Large ribosomal subunit protein eL32.